A 99-amino-acid chain; its full sequence is Cell division protein FtsB (99 aa).

The Cytoplasmic segment spans residues 1 to 3 (MKF). The helical transmembrane segment at 4–21 (FVITLIVLLGLLQYRLWS) threads the bilayer. Topologically, residues 22–99 (GDNSLPEYFV…GDRAVSSPSQ (78 aa)) are periplasmic. Positions 31 to 73 (VLQKQIAAQQDGNAKLNERNQVLKEEIIDLKSGTEAIEERARN) form a coiled coil.

It belongs to the FtsB family. Part of a complex composed of FtsB, FtsL and FtsQ.

It is found in the cell inner membrane. In terms of biological role, essential cell division protein. May link together the upstream cell division proteins, which are predominantly cytoplasmic, with the downstream cell division proteins, which are predominantly periplasmic. This chain is Cell division protein FtsB, found in Shewanella oneidensis (strain ATCC 700550 / JCM 31522 / CIP 106686 / LMG 19005 / NCIMB 14063 / MR-1).